The sequence spans 435 residues: Mitochondrial association factor 1 form b0 (435 aa).

The signal sequence occupies residues 1–27; the sequence is MWRIWRCRLSFLFVTGCLLGALTAGLG. Over 28–96 the chain is Vacuolar; sequence SQMSDSVGRN…VTARRRRNRR (69 aa). The tract at residues 43–89 is disordered; the sequence is GVADASQEAGDVVEERTERTEEQVFAPGPPRRHSSESLFPRNPSVTA. Basic and acidic residues predominate over residues 55-64; the sequence is VEERTERTEE. The chain crosses the membrane as a helical span at residues 97–117; that stretch reads ITLIATAVGVAVILAALYVLR. Residues 118–435 are Cytoplasmic-facing; sequence RRRAQPPQEP…ESTYLASMLD (318 aa). A disordered region spans residues 120-162; sequence RAQPPQEPEPPTRLRTPRPRAPSGQQQPSESEPPAGVPMKPGS.

It is found in the parasitophorous vacuole membrane. Functionally, during host cell infection by tachyzoites, does not play a role in tethering the parasitophorous vacuole to the host mitochondria. This is Mitochondrial association factor 1 form b0 from Toxoplasma gondii.